The sequence spans 225 residues: 3-dehydroquinate dehydratase (225 aa).

3-dehydroquinate is bound by residues 30-32 (EWR) and arginine 62. Residue histidine 118 is the Proton donor/acceptor of the active site. Residue lysine 143 is the Schiff-base intermediate with substrate of the active site. 3-dehydroquinate is bound by residues arginine 186, serine 205, and glutamine 209.

This sequence belongs to the type-I 3-dehydroquinase family. Homodimer.

The enzyme catalyses 3-dehydroquinate = 3-dehydroshikimate + H2O. It functions in the pathway metabolic intermediate biosynthesis; chorismate biosynthesis; chorismate from D-erythrose 4-phosphate and phosphoenolpyruvate: step 3/7. In terms of biological role, involved in the third step of the chorismate pathway, which leads to the biosynthesis of aromatic amino acids. Catalyzes the cis-dehydration of 3-dehydroquinate (DHQ) and introduces the first double bond of the aromatic ring to yield 3-dehydroshikimate. This Streptococcus thermophilus (strain ATCC BAA-491 / LMD-9) protein is 3-dehydroquinate dehydratase.